A 245-amino-acid polypeptide reads, in one-letter code: Cysteine-rich secretory protein 3 (245 aa).

Positions 1-20 (MTLFPVLLFLVAGLLPSFPA) are cleaved as a signal peptide. Residues 43–171 (VNKHNELRRA…VLKYYYVCQY (129 aa)) form the SCP domain. Intrachain disulfides connect cysteine 191–cysteine 198, cysteine 194–cysteine 203, cysteine 207–cysteine 240, cysteine 216–cysteine 234, and cysteine 225–cysteine 238. Residues 207-240 (CKYEDLYSNCKSLKLTLTCKHQLVRDSCKASCNC) form the ShKT domain. Asparagine 239 carries N-linked (GlcNAc...) asparagine glycosylation.

Belongs to the CRISP family. In terms of assembly, interacts with A1BG. As to expression, salivary gland, pancreas and prostate &gt; epididymis, ovary, thymus and colon.

It localises to the secreted. The protein is Cysteine-rich secretory protein 3 (CRISP3) of Homo sapiens (Human).